Consider the following 99-residue polypeptide: UPF0122 protein UUR10_0158 (99 aa).

Belongs to the UPF0122 family.

Its function is as follows. Might take part in the signal recognition particle (SRP) pathway. This is inferred from the conservation of its genetic proximity to ftsY/ffh. May be a regulatory protein. The protein is UPF0122 protein UUR10_0158 of Ureaplasma urealyticum serovar 10 (strain ATCC 33699 / Western).